We begin with the raw amino-acid sequence, 881 residues long: Band 4.1-like protein 1 (881 aa).

Residue methionine 1 is modified to N-acetylmethionine. The disordered stretch occupies residues 1-88 (MTTETGPDSE…TPSKAQKSPQ (88 aa)). The span at 17–35 (EAPQQPEAAAAVTTPVTPA) shows a compositional bias: low complexity. Threonine 30 bears the Phosphothreonine mark. A compositionally biased stretch (basic and acidic residues) spans 38–50 (GHPEANSNEKHPS). At serine 75 the chain carries Phosphoserine. The segment covering 76 to 87 (ERTTPSKAQKSP) has biased composition (polar residues). Threonine 79 carries the post-translational modification Phosphothreonine. The region spanning 97–378 (AICRVTLLDA…EHHTFFRLVS (282 aa)) is the FERM domain. Tyrosine 343 bears the Phosphotyrosine mark. 3 positions are modified to phosphoserine: serine 378, serine 430, and serine 437. Residues 428 to 501 (SRSLDGAEFS…HKQEFLDKPE (74 aa)) form a disordered region. The segment covering 444–457 (ENHDAGPDGDKRDE) has biased composition (basic and acidic residues). A phosphoserine mark is found at serine 461 and serine 466. The span at 466-501 (SEAEEGEVRTPTKIKELKPEQETTPRHKQEFLDKPE) shows a compositional bias: basic and acidic residues. Threonine 475 carries the post-translational modification Phosphothreonine. The interval 483-541 (KPEQETTPRHKQEFLDKPEDVLLKHQASINELKRTLKEPNSKLIHRDRDWERERRLPSS) is spectrin--actin-binding. A Phosphoserine modification is found at serine 510. Residues 514–538 (LKRTLKEPNSKLIHRDRDWERERRL) are compositionally biased toward basic and acidic residues. The segment at 514–596 (LKRTLKEPNS…QERDTVFLKD (83 aa)) is disordered. 4 positions are modified to phosphoserine: serine 540, serine 541, serine 544, and serine 546. Threonine 550 carries the post-translational modification Phosphothreonine. Over residues 550–577 (TPEKANERAGLREGSEEKVKPPRPRAPE) the composition is skewed to basic and acidic residues. A phosphoserine mark is found at serine 564 and serine 578. Threonine 580 is modified (phosphothreonine). 7 positions are modified to phosphoserine: serine 639, serine 648, serine 650, serine 667, serine 672, serine 678, and serine 685. The interval 642-699 (ELDRDKSDSDTEGLLFSRDLNKGAPSQDDESGGIEDSPDRGACSTPDMPQFEPVKTET) is disordered. At threonine 686 the chain carries Phosphothreonine. Serine 722, serine 784, and serine 870 each carry phosphoserine. The tract at residues 746–881 (SITTETISTT…EERDKKPQES (136 aa)) is C-terminal (CTD).

In terms of assembly, interacts with AGAP2. Highest expression in brain, lower in heart, kidney, pancreas, placenta, lung and skeletal muscle.

The protein localises to the cytoplasm. It is found in the cytoskeleton. May function to confer stability and plasticity to neuronal membrane via multiple interactions, including the spectrin-actin-based cytoskeleton, integral membrane channels and membrane-associated guanylate kinases. This Homo sapiens (Human) protein is Band 4.1-like protein 1.